Consider the following 145-residue polypeptide: Pleckstrin homology domain-containing protein 1 (145 aa).

A PH domain is found at 26-127; sequence NPERSGWLTK…WINSIGRSIV (102 aa). Positions 29 to 53 are binds specifically PtdIns3P; that stretch reads RSGWLTKQGDYIKTWRRRWFVLKRG.

Binds PtdIns3P. As to expression, ubiquitously expressed.

The protein resides in the cytoplasm. Its function is as follows. Binds specifically to phosphatidylinositol 3-phosphate (PtdIns3P), but not to other phosphoinositides. The sequence is that of Pleckstrin homology domain-containing protein 1 (PH1) from Arabidopsis thaliana (Mouse-ear cress).